The primary structure comprises 426 residues: Dihydroorotase (426 aa).

Residues His62 and His64 each coordinate Zn(2+). Substrate-binding positions include 64-66 (HLR) and Asn96. Positions 154, 181, 234, and 307 each coordinate Zn(2+). Residue Asp307 is part of the active site. Residue His311 coordinates substrate.

Belongs to the metallo-dependent hydrolases superfamily. DHOase family. Class I DHOase subfamily. Requires Zn(2+) as cofactor.

It catalyses the reaction (S)-dihydroorotate + H2O = N-carbamoyl-L-aspartate + H(+). Its pathway is pyrimidine metabolism; UMP biosynthesis via de novo pathway; (S)-dihydroorotate from bicarbonate: step 3/3. In terms of biological role, catalyzes the reversible cyclization of carbamoyl aspartate to dihydroorotate. This chain is Dihydroorotase, found in Syntrophus aciditrophicus (strain SB).